The following is a 192-amino-acid chain: MVKIGVLGLQGAVREHVRSIEACGAEAVVIKKVEQLTQIDGLIIPGGESTTMRRLMDKYGFIEPLKQFAREGKPMFGTCAGLIILAKKIVGYDEPHLGLMDITVERNSFGRQRESFEASLAIKGVADDFIGVFIRAPHIVSVGADVDVLATYEDRIVAARQGQFLGCSFHPELTDDHRMTQYFINMVKETKE.

Residue 47-49 (GES) participates in L-glutamine binding. Residue C79 is the Nucleophile of the active site. L-glutamine contacts are provided by residues R106 and 134 to 135 (IR). Catalysis depends on charge relay system residues H170 and E172.

Belongs to the glutaminase PdxT/SNO family. In terms of assembly, in the presence of PdxS, forms a dodecamer of heterodimers. Only shows activity in the heterodimer.

The catalysed reaction is aldehydo-D-ribose 5-phosphate + D-glyceraldehyde 3-phosphate + L-glutamine = pyridoxal 5'-phosphate + L-glutamate + phosphate + 3 H2O + H(+). It carries out the reaction L-glutamine + H2O = L-glutamate + NH4(+). The protein operates within cofactor biosynthesis; pyridoxal 5'-phosphate biosynthesis. Catalyzes the hydrolysis of glutamine to glutamate and ammonia as part of the biosynthesis of pyridoxal 5'-phosphate. The resulting ammonia molecule is channeled to the active site of PdxS. This is Pyridoxal 5'-phosphate synthase subunit PdxT from Anoxybacillus flavithermus (strain DSM 21510 / WK1).